A 187-amino-acid polypeptide reads, in one-letter code: ATP synthase subunit delta (187 aa).

This sequence belongs to the ATPase delta chain family. In terms of assembly, F-type ATPases have 2 components, F(1) - the catalytic core - and F(0) - the membrane proton channel. F(1) has five subunits: alpha(3), beta(3), gamma(1), delta(1), epsilon(1). F(0) has three main subunits: a(1), b(2) and c(10-14). The alpha and beta chains form an alternating ring which encloses part of the gamma chain. F(1) is attached to F(0) by a central stalk formed by the gamma and epsilon chains, while a peripheral stalk is formed by the delta and b chains.

The protein localises to the cell membrane. Its function is as follows. F(1)F(0) ATP synthase produces ATP from ADP in the presence of a proton or sodium gradient. F-type ATPases consist of two structural domains, F(1) containing the extramembraneous catalytic core and F(0) containing the membrane proton channel, linked together by a central stalk and a peripheral stalk. During catalysis, ATP synthesis in the catalytic domain of F(1) is coupled via a rotary mechanism of the central stalk subunits to proton translocation. In terms of biological role, this protein is part of the stalk that links CF(0) to CF(1). It either transmits conformational changes from CF(0) to CF(1) or is implicated in proton conduction. The protein is ATP synthase subunit delta of Mesomycoplasma hyopneumoniae (strain 232) (Mycoplasma hyopneumoniae).